We begin with the raw amino-acid sequence, 93 residues long: Protein F-93 (93 aa).

As to quaternary structure, homodimer.

In terms of biological role, probable transcription factor that recognizes a (pseudo-)palindromic DNA target sequence. In Saccharolobus solfataricus (Sulfolobus solfataricus), this protein is Protein F-93.